Reading from the N-terminus, the 273-residue chain is Ribosomal RNA small subunit methyltransferase A (273 aa).

6 residues coordinate S-adenosyl-L-methionine: Asn-19, Leu-21, Gly-46, Glu-67, Asp-92, and Asn-113.

This sequence belongs to the class I-like SAM-binding methyltransferase superfamily. rRNA adenine N(6)-methyltransferase family. RsmA subfamily.

The protein localises to the cytoplasm. The enzyme catalyses adenosine(1518)/adenosine(1519) in 16S rRNA + 4 S-adenosyl-L-methionine = N(6)-dimethyladenosine(1518)/N(6)-dimethyladenosine(1519) in 16S rRNA + 4 S-adenosyl-L-homocysteine + 4 H(+). Specifically dimethylates two adjacent adenosines (A1518 and A1519) in the loop of a conserved hairpin near the 3'-end of 16S rRNA in the 30S particle. May play a critical role in biogenesis of 30S subunits. This is Ribosomal RNA small subunit methyltransferase A from Hahella chejuensis (strain KCTC 2396).